The following is a 483-amino-acid chain: Proton-coupled amino acid transporter 2 (483 aa).

Topologically, residues 1–58 (MSVTKSTEGPQGAVAIKLDLMSPPESAKKLENKDSTFLDESPSESAGLKKTKGITVFQ) are cytoplasmic. Over residues 26–36 (SAKKLENKDST) the composition is skewed to basic and acidic residues. The tract at residues 26-46 (SAKKLENKDSTFLDESPSESA) is disordered. The chain crosses the membrane as a helical span at residues 59–79 (ALIHLVKGNMGTGILGLPLAV). Over 80–81 (KN) the chain is Extracellular. A helical membrane pass occupies residues 82 to 102 (AGILMGPLSLLVMGFIACHCM). Topologically, residues 103-148 (HILVKCAQRFCKRLNKPFMDYGDTVMHGLEANPNAWLQNHAHWGRH) are cytoplasmic. A helical transmembrane segment spans residues 149-169 (IVSFFLIITQLGFCCVYIVFL). The Extracellular segment spans residues 170 to 197 (ADNLKQVVEAVNSTTNNCYSNETVILTP). The helical transmembrane segment at 198–218 (TMDSRLYMLSFLPFLVLLVLI) threads the bilayer. Over 219-222 (RNLR) the chain is Cytoplasmic. Residues 223–243 (ILTIFSMLANISMLVSLVIII) form a helical membrane-spanning segment. The Extracellular portion of the chain corresponds to 244 to 264 (QYITQEIPDPSRLPLVASWKT). Residues 265–285 (YPLFFGTAIFSFESIGVVLPL) form a helical membrane-spanning segment. The Cytoplasmic segment spans residues 286–296 (ENKMKNARHFP). The chain crosses the membrane as a helical span at residues 297–317 (AILSLGMSIVTSLYIGMAALG). Residues 318–349 (YLRFGDDIKASISLNLPNCWLYQSVKLLYIAG) are Extracellular-facing. The helical transmembrane segment at 350 to 370 (ILCTYALQFYVPAEIIIPFAI) threads the bilayer. The Cytoplasmic segment spans residues 371-379 (SRVSTRWAL). Residues 380–400 (PLDLSIRLVMVCLTCLLAILI) traverse the membrane as a helical segment. The Extracellular portion of the chain corresponds to 401-404 (PRLD). The chain crosses the membrane as a helical span at residues 405-425 (LVISLVGSVSGTALALIIPPL). Topologically, residues 426 to 437 (LEVTTFYSEGMS) are cytoplasmic. A helical membrane pass occupies residues 438–458 (PLTIFKDALISILGFVGFVVG). Over 459-483 (TYQALDELLKSEDSHPFSNSTTFVR) the chain is Extracellular.

The protein belongs to the amino acid/polyamine transporter 2 family. In terms of tissue distribution, abundantly expressed in kidney and muscle. Expressed in the S1 segment of the proximal tubule close to the glomerulus.

The protein resides in the cell membrane. It is found in the endoplasmic reticulum membrane. It localises to the recycling endosome membrane. It carries out the reaction glycine(in) + H(+)(in) = glycine(out) + H(+)(out). The enzyme catalyses L-alanine(in) + H(+)(in) = L-alanine(out) + H(+)(out). It catalyses the reaction D-alanine(in) + H(+)(in) = D-alanine(out) + H(+)(out). The catalysed reaction is L-proline(out) + H(+)(out) = L-proline(in) + H(+)(in). It carries out the reaction D-proline(out) + H(+)(out) = D-proline(in) + H(+)(in). The enzyme catalyses 4-hydroxy-L-proline(in) + H(+)(in) = 4-hydroxy-L-proline(out) + H(+)(out). It catalyses the reaction L-serine(in) + H(+)(in) = L-serine(out) + H(+)(out). The catalysed reaction is D-serine(out) + H(+)(out) = D-serine(in) + H(+)(in). It carries out the reaction beta-alanine(in) + H(+)(in) = beta-alanine(out) + H(+)(out). The enzyme catalyses 4-aminobutanoate(in) + H(+)(in) = 4-aminobutanoate(out) + H(+)(out). It catalyses the reaction sarcosine(in) + H(+)(in) = sarcosine(out) + H(+)(out). The catalysed reaction is N,N-dimethylglycine(in) + H(+)(in) = N,N-dimethylglycine(out) + H(+)(out). Functionally, electrogenic proton/amino acid symporter with a high selectivity for the small side chains amino acids glycine, alanine and proline, where both L- and D-enantiomers are transported. Extension of the backbone length, as in beta-alanine and 4-aminobutanoate or methylation of the amino group, as in sarcosine and N,N-dimethylglycine, are also tolerated but decrease transport efficiency. A free carboxyl group is preferred. This chain is Proton-coupled amino acid transporter 2, found in Homo sapiens (Human).